The chain runs to 301 residues: Polyamine aminopropyltransferase (301 aa).

The PABS domain maps to 4–240; sequence WHWLLEWQTP…GLWGFVYGGV (237 aa). Gln33 contributes to the S-methyl-5'-thioadenosine binding site. Spermidine-binding residues include His64 and Glu89. S-methyl-5'-thioadenosine contacts are provided by residues Asp109 and 141 to 142; that span reads DG. Asp159 acts as the Proton acceptor in catalysis.

This sequence belongs to the spermidine/spermine synthase family. In terms of assembly, homodimer or homotetramer.

The protein localises to the cytoplasm. It catalyses the reaction S-adenosyl 3-(methylsulfanyl)propylamine + putrescine = S-methyl-5'-thioadenosine + spermidine + H(+). It participates in amine and polyamine biosynthesis; spermidine biosynthesis; spermidine from putrescine: step 1/1. Its function is as follows. Catalyzes the irreversible transfer of a propylamine group from the amino donor S-adenosylmethioninamine (decarboxy-AdoMet) to putrescine (1,4-diaminobutane) to yield spermidine. The protein is Polyamine aminopropyltransferase of Saccharolobus islandicus (strain Y.N.15.51 / Yellowstone #2) (Sulfolobus islandicus).